Consider the following 421-residue polypeptide: Anthranilate synthase component 1 (421 aa).

Residues Ser31 and 207–209 (PYM) each bind L-tryptophan. Residue 242–243 (GT) participates in chorismate binding. Glu269 provides a ligand contact to Mg(2+). Chorismate-binding positions include Tyr357, Arg377, 391–393 (GAG), and Gly393. Residue Glu406 participates in Mg(2+) binding.

The protein belongs to the anthranilate synthase component I family. As to quaternary structure, heterotetramer consisting of two non-identical subunits: a beta subunit (TrpG) and a large alpha subunit (TrpE). Mg(2+) is required as a cofactor.

The catalysed reaction is chorismate + L-glutamine = anthranilate + pyruvate + L-glutamate + H(+). Its pathway is amino-acid biosynthesis; L-tryptophan biosynthesis; L-tryptophan from chorismate: step 1/5. Its activity is regulated as follows. Cooperatively feedback inhibited by tryptophan. Functionally, part of a heterotetrameric complex that catalyzes the two-step biosynthesis of anthranilate, an intermediate in the biosynthesis of L-tryptophan. In the first step, the glutamine-binding beta subunit (TrpG) of anthranilate synthase (AS) provides the glutamine amidotransferase activity which generates ammonia as a substrate that, along with chorismate, is used in the second step, catalyzed by the large alpha subunit of AS (TrpE) to produce anthranilate. In the absence of TrpG, TrpE can synthesize anthranilate directly from chorismate and high concentrations of ammonia. The sequence is that of Anthranilate synthase component 1 (trpE) from Saccharolobus solfataricus (strain ATCC 35092 / DSM 1617 / JCM 11322 / P2) (Sulfolobus solfataricus).